Here is a 160-residue protein sequence, read N- to C-terminus: Serine-protein kinase RsbW (160 aa).

Belongs to the anti-sigma-factor family.

It catalyses the reaction L-seryl-[protein] + ATP = O-phospho-L-seryl-[protein] + ADP + H(+). It carries out the reaction L-threonyl-[protein] + ATP = O-phospho-L-threonyl-[protein] + ADP + H(+). Negative regulator of sigma-B activity. Phosphorylates and inactivates its specific antagonist protein, RsbV. Upon phosphorylation of RsbV, RsbW is released and binds to sigma-B, thereby blocking its ability to form an RNA polymerase holoenzyme (E-sigma-B). The protein is Serine-protein kinase RsbW of Bacillus cereus (strain Q1).